The sequence spans 273 residues: Dermonecrotic toxin LvSicTox-alphaIC1ai (273 aa).

The active site involves His5. Mg(2+) is bound by residues Glu25 and Asp27. The active-site Nucleophile is His41. 2 disulfide bridges follow: Cys45-Cys51 and Cys47-Cys190. Position 85 (Asp85) interacts with Mg(2+).

The protein belongs to the arthropod phospholipase D family. Class II subfamily. It depends on Mg(2+) as a cofactor. As to expression, expressed by the venom gland.

The protein resides in the secreted. The catalysed reaction is an N-(acyl)-sphingosylphosphocholine = an N-(acyl)-sphingosyl-1,3-cyclic phosphate + choline. It catalyses the reaction an N-(acyl)-sphingosylphosphoethanolamine = an N-(acyl)-sphingosyl-1,3-cyclic phosphate + ethanolamine. The enzyme catalyses a 1-acyl-sn-glycero-3-phosphocholine = a 1-acyl-sn-glycero-2,3-cyclic phosphate + choline. It carries out the reaction a 1-acyl-sn-glycero-3-phosphoethanolamine = a 1-acyl-sn-glycero-2,3-cyclic phosphate + ethanolamine. Its function is as follows. Dermonecrotic toxins cleave the phosphodiester linkage between the phosphate and headgroup of certain phospholipids (sphingolipid and lysolipid substrates), forming an alcohol (often choline) and a cyclic phosphate. This toxin acts on sphingomyelin (SM). It may also act on ceramide phosphoethanolamine (CPE), lysophosphatidylcholine (LPC) and lysophosphatidylethanolamine (LPE), but not on lysophosphatidylserine (LPS), and lysophosphatidylglycerol (LPG). It acts by transphosphatidylation, releasing exclusively cyclic phosphate products as second products. Induces dermonecrosis, hemolysis, increased vascular permeability, edema, inflammatory response, and platelet aggregation. The polypeptide is Dermonecrotic toxin LvSicTox-alphaIC1ai (Loxosceles variegata (Recluse spider)).